Reading from the N-terminus, the 358-residue chain is Protein-glutamate methylesterase/protein-glutamine glutaminase 2 (358 aa).

The 118-residue stretch at 7-124 folds into the Response regulatory domain; it reads SVLLVDDSAV…KNFLIESAAE (118 aa). Aspartate 58 is modified (4-aspartylphosphate). In terms of domain architecture, CheB-type methylesterase spans 170–358; the sequence is AQTTERIVAI…QEIHQAILHR (189 aa). Catalysis depends on residues serine 182, histidine 208, and aspartate 304.

It belongs to the CheB family. In terms of processing, phosphorylated by CheA. Phosphorylation of the N-terminal regulatory domain activates the methylesterase activity.

The protein localises to the cytoplasm. The enzyme catalyses [protein]-L-glutamate 5-O-methyl ester + H2O = L-glutamyl-[protein] + methanol + H(+). It catalyses the reaction L-glutaminyl-[protein] + H2O = L-glutamyl-[protein] + NH4(+). Its function is as follows. Involved in chemotaxis. Part of a chemotaxis signal transduction system that modulates chemotaxis in response to various stimuli. Catalyzes the demethylation of specific methylglutamate residues introduced into the chemoreceptors (methyl-accepting chemotaxis proteins or MCP) by CheR. Also mediates the irreversible deamidation of specific glutamine residues to glutamic acid. This Pseudomonas syringae pv. tomato (strain ATCC BAA-871 / DC3000) protein is Protein-glutamate methylesterase/protein-glutamine glutaminase 2.